The chain runs to 211 residues: Minor capsid protein VP2 (211 aa).

This sequence belongs to the norovirus VP2 family. As to quaternary structure, homooligomer. The portal-like structure consists in 12 copies of VP2. Interacts with capsid protein VP1.

The protein resides in the virion. The protein localises to the host cytoplasm. Its function is as follows. Minor structural protein that forms a portal-like structure at a unique three-fold axis of symmetry, following binding to the host receptor. The channel formed by VP2 may allow the delivery of the viral genome through the host endosomal membrane. The sequence is that of Minor capsid protein VP2 from Homo sapiens (Human).